The following is a 392-amino-acid chain: 5-azacytidine-induced protein 2 (392 aa).

Residues 1 to 197 form a homodimerization region; that stretch reads MDALVEDDIC…IELQKAKQTD (197 aa). Coiled coils occupy residues 40–76, 102–135, and 166–196; these read ALVT…LIAR, DRDN…EVEL, and DLKI…AKQT. The interaction with TBK1 and IKBKE stretch occupies residues 216–257; the sequence is SDNMQHAYWELKREMSNLHLVTQVQAELLRKLKTSTAIKKAC. Residues Ser-318 and Ser-353 each carry the phosphoserine modification. The tract at residues 345-365 is disordered; that stretch reads EDNSWVFPSPPKSSETAFGET.

In terms of assembly, homodimer. Interacts with IKBKE, TBK1 and TICAM1. Interacts with TAX1BP1. Interacts with CALCOCO2. In terms of processing, ubiquitinated via 'Lys-48'-linked polyubiquitination by TRIM38, leading to its degradation.

It localises to the cytoplasm. In terms of biological role, adapter protein which binds TBK1 and IKBKE playing a role in antiviral innate immunity. Activates serine/threonine-protein kinase TBK1 and facilitates its oligomerization. Enhances the phosphorylation of NF-kappa-B p65 subunit RELA by TBK1. Promotes TBK1-induced as well as TNF-alpha or PMA-induced activation of NF-kappa-B. Participates in IFNB promoter activation via TICAM1. The protein is 5-azacytidine-induced protein 2 (AZI2) of Pongo abelii (Sumatran orangutan).